Reading from the N-terminus, the 393-residue chain is Na(+)/H(+) antiporter NhaA (393 aa).

12 helical membrane passes run 23–43 (AGGITLMAAAALALIVANSPF), 58–78 (LSLAHWINDALMAKFFLLVGL), 96–116 (MLPGIAAAGGVILPAIIFAVL), 126–146 (GWAVPSATDIAFALGVLSLLG), 155–175 (VFLATLAILDDLAAVVIIAIF), 178–198 (AEISMPYLGAAFITAAVLFVM), 201–221 (MGVVKLLPYLISAVILWFFVF), 224–244 (GVHATVAGVVAALMIPLKPAP), 265–285 (VAFIVVPIFGFANAGISFKGL), 298–318 (ILLGLFLGKQFGVFGAAWLAI), 334–354 (LYGVAILCGIGFTMSIFIGLL), and 367–387 (IGVLSGSALSAICGYLLLRAA).

The protein belongs to the NhaA Na(+)/H(+) (TC 2.A.33) antiporter family.

Its subcellular location is the cell inner membrane. It catalyses the reaction Na(+)(in) + 2 H(+)(out) = Na(+)(out) + 2 H(+)(in). Na(+)/H(+) antiporter that extrudes sodium in exchange for external protons. The polypeptide is Na(+)/H(+) antiporter NhaA (Brucella suis (strain ATCC 23445 / NCTC 10510)).